The chain runs to 506 residues: Glucosidase 2 subunit beta (506 aa).

The first 23 residues, Met1–Ala23, serve as a signal peptide directing secretion. An intrachain disulfide couples Cys86 to Cys108. Coiled-coil stretches lie at residues Ser172–Thr243 and Glu338–His374. Residues Glu279 to Pro474 form the MRH domain. Cystine bridges form between Cys431-Cys460 and Cys445-Cys472. The ER retrieval sequence motif lies at Val503–Leu506.

As to quaternary structure, heterodimer of a catalytic subunit alpha (gls2) and a subunit beta (gtb1).

Its subcellular location is the endoplasmic reticulum. In terms of biological role, subunit of glucosidase 2, which cleaves sequentially the 2 innermost alpha-1,3-linked glucose residues from the Glc(2)Man(9)GlcNAc(2) oligosaccharide precursor of immature glycoproteins in the endoplasmic reticulum (ER). Specifically required for the cleavage of the final glucose. The subunit beta retains the catalytic subunit alpha in the ER. This Schizosaccharomyces pombe (strain 972 / ATCC 24843) (Fission yeast) protein is Glucosidase 2 subunit beta (gtb1).